A 145-amino-acid polypeptide reads, in one-letter code: D-aminoacyl-tRNA deacylase (145 aa).

The Gly-cisPro motif, important for rejection of L-amino acids motif lies at 137–138 (GP).

It belongs to the DTD family. Homodimer.

It is found in the cytoplasm. It catalyses the reaction glycyl-tRNA(Ala) + H2O = tRNA(Ala) + glycine + H(+). The enzyme catalyses a D-aminoacyl-tRNA + H2O = a tRNA + a D-alpha-amino acid + H(+). Its function is as follows. An aminoacyl-tRNA editing enzyme that deacylates mischarged D-aminoacyl-tRNAs. Also deacylates mischarged glycyl-tRNA(Ala), protecting cells against glycine mischarging by AlaRS. Acts via tRNA-based rather than protein-based catalysis; rejects L-amino acids rather than detecting D-amino acids in the active site. By recycling D-aminoacyl-tRNA to D-amino acids and free tRNA molecules, this enzyme counteracts the toxicity associated with the formation of D-aminoacyl-tRNA entities in vivo and helps enforce protein L-homochirality. The sequence is that of D-aminoacyl-tRNA deacylase from Shewanella baltica (strain OS223).